The primary structure comprises 141 residues: Cystatin-S (141 aa).

The N-terminal stretch at 1 to 27 (MAYLLHAQLFLLTTFILVLNMRLCPVL) is a signal peptide. Positions 76–80 (QVVAG) match the Secondary area of contact motif. Intrachain disulfides connect Cys-94-Cys-104 and Cys-118-Cys-138.

Belongs to the cystatin family. In terms of tissue distribution, found in saliva, tears, urine and seminal fluid.

Its subcellular location is the secreted. Functionally, this protein strongly inhibits papain and ficin, partially inhibits stem bromelain and bovine cathepsin C, but does not inhibit porcine cathepsin B or clostripain. Papain is inhibited non-competitively. This chain is Cystatin-S (Cst4), found in Rattus norvegicus (Rat).